A 378-amino-acid polypeptide reads, in one-letter code: Calponin homolog OV9M (378 aa).

Residues Met1–Ala20 show a composition bias toward low complexity. Residues Met1–Val35 form a disordered region. 7 Calponin-like repeats span residues Ile50–Gln75, Val98–Cys123, Val151–Thr176, Ile197–Thr222, Ile244–Val269, Val285–Thr310, and Ile330–Lys355. The interval Glu175–Gln194 is disordered. A disordered region spans residues His230–Gln256. A compositionally biased stretch (polar residues) spans Ser238–Gln256. Positions Pro331–Arg352 are disordered.

Belongs to the calponin family. As to expression, found in the longitudinal muscles below the hypodermis.

Its function is as follows. Could be involved in muscle contraction. The chain is Calponin homolog OV9M from Onchocerca volvulus.